The sequence spans 253 residues: Type III pantothenate kinase (253 aa).

ATP is bound at residue 6-13 (DVGNTNTV). 103–106 (GADR) is a substrate binding site. Aspartate 105 serves as the catalytic Proton acceptor. Aspartate 125 is a K(+) binding site. Threonine 128 is a binding site for ATP. A substrate-binding site is contributed by threonine 180.

This sequence belongs to the type III pantothenate kinase family. Homodimer. The cofactor is NH4(+). Requires K(+) as cofactor.

The protein localises to the cytoplasm. The catalysed reaction is (R)-pantothenate + ATP = (R)-4'-phosphopantothenate + ADP + H(+). It participates in cofactor biosynthesis; coenzyme A biosynthesis; CoA from (R)-pantothenate: step 1/5. Its function is as follows. Catalyzes the phosphorylation of pantothenate (Pan), the first step in CoA biosynthesis. This is Type III pantothenate kinase from Parafrankia sp. (strain EAN1pec).